The primary structure comprises 69 residues: DNA gyrase inhibitor YacG (69 aa).

The segment at 1–28 (MSGEGKKHGSNVEPLRPTRPCPECGRPS) is disordered. Zn(2+) contacts are provided by C21, C24, C36, and C40.

Belongs to the DNA gyrase inhibitor YacG family. As to quaternary structure, interacts with GyrB. Zn(2+) serves as cofactor.

Functionally, inhibits all the catalytic activities of DNA gyrase by preventing its interaction with DNA. Acts by binding directly to the C-terminal domain of GyrB, which probably disrupts DNA binding by the gyrase. The chain is DNA gyrase inhibitor YacG from Sinorhizobium fredii (strain NBRC 101917 / NGR234).